We begin with the raw amino-acid sequence, 43 residues long: MQTATVLSIFISSLLLGITIYSIYISFGPISRELRDPFEEHEE.

A helical transmembrane segment spans residues 5-25 (TVLSIFISSLLLGITIYSIYI).

The protein belongs to the PsbN family.

It is found in the plastid. The protein localises to the chloroplast thylakoid membrane. May play a role in photosystem I and II biogenesis. This Gracilaria tenuistipitata var. liui (Red alga) protein is Protein PsbN.